We begin with the raw amino-acid sequence, 408 residues long: Imidazolonepropionase (408 aa).

Fe(3+)-binding residues include His73 and His75. Zn(2+) is bound by residues His73 and His75. Residues Arg82, Tyr145, and His178 each contribute to the 4-imidazolone-5-propanoate site. Residue Tyr145 participates in N-formimidoyl-L-glutamate binding. His243 lines the Fe(3+) pocket. His243 contacts Zn(2+). A 4-imidazolone-5-propanoate-binding site is contributed by Gln246. Residue Asp318 participates in Fe(3+) binding. Asp318 is a Zn(2+) binding site. Residues Asn320 and Gly322 each contribute to the N-formimidoyl-L-glutamate site. Residue Ser323 participates in 4-imidazolone-5-propanoate binding.

It belongs to the metallo-dependent hydrolases superfamily. HutI family. Requires Zn(2+) as cofactor. The cofactor is Fe(3+).

It is found in the cytoplasm. It carries out the reaction 4-imidazolone-5-propanoate + H2O = N-formimidoyl-L-glutamate. It participates in amino-acid degradation; L-histidine degradation into L-glutamate; N-formimidoyl-L-glutamate from L-histidine: step 3/3. Its function is as follows. Catalyzes the hydrolytic cleavage of the carbon-nitrogen bond in imidazolone-5-propanoate to yield N-formimidoyl-L-glutamate. It is the third step in the universal histidine degradation pathway. This Shewanella sp. (strain ANA-3) protein is Imidazolonepropionase.